The sequence spans 977 residues: Glutamate receptor 2 (977 aa).

Positions 1-19 (MNKNLLVFGFLIFVKIGET) are cleaved as a signal peptide. Residues 20 to 621 (SKKFPLRAFV…FSFMEPLGMT (602 aa)) lie on the Extracellular side of the membrane. N-linked (GlcNAc...) asparagine glycans are attached at residues Asn36, Asn227, Asn291, Asn427, Asn532, and Asn566. Residues 622–642 (IWIFTLSSYFGVSLTIFLVSW) form a helical membrane-spanning segment. The Cytoplasmic segment spans residues 643–695 (FSPYEKRIEFKRGEFTVTNEFTLYNSLWFTLAAFMQQGTDILPRAVSGRIASS). Residues 696–716 (CWWFFTLIIVSSYTANLAAFL) form a helical membrane-spanning segment. The Extracellular segment spans residues 717–898 (TLERMTPPIE…GTSSSLNLSK (182 aa)). N-linked (GlcNAc...) asparagine glycosylation is found at Asn783 and Asn895. A helical membrane pass occupies residues 899-919 (VAGIFYILLAGMVLSMCTALV). At 920-977 (EFLFRKNKENREKERNRMRSSRPLKPGILASCERAKQKQLQNRRTKSEEVSTPRSTLF) the chain is on the cytoplasmic side. A disordered region spans residues 954–977 (AKQKQLQNRRTKSEEVSTPRSTLF).

Belongs to the glutamate-gated ion channel (TC 1.A.10.1) family. As to expression, command interneurons of the locomotory control circuit (AIA, AIB, AVA, AVD, AVE, PVC, RIA, RIG and RIR) and motor neurons (AVG, M1, RMDD and RMDV).

It is found in the membrane. Its subcellular location is the postsynaptic cell membrane. Its function is as follows. L-glutamate acts as an excitatory neurotransmitter at many synapses in the central nervous system. The postsynaptic actions of glutamate are mediated by a variety of receptors that are named according to their selective agonists. Required for response to mechanical and osmotic stimuli. This is Glutamate receptor 2 (glr-2) from Caenorhabditis elegans.